The chain runs to 1035 residues: Protein hir-1 (1035 aa).

WD repeat units follow at residues 15–54, 68–107, 129–168, 171–210, 232–275, 299–338, and 342–383; these read QKDF…NSHD, HHLG…PSHT, GHDN…KLKT, VHQS…PNAT, PLTT…SEIN, DENS…PVLI, and IASK…WVAK. A disordered region spans residues 393-479; it reads KYGGSRKGMG…PEEESADKTA (87 aa). Residues 408–425 show a composition bias toward basic and acidic residues; it reads DGLHLENHSKEKELRGAE.

Belongs to the WD repeat HIR1 family.

It localises to the nucleus. Required for replication-independent chromatin assembly and for the periodic repression of histone gene transcription during the cell cycle. The protein is Protein hir-1 (hir-1) of Neurospora crassa (strain ATCC 24698 / 74-OR23-1A / CBS 708.71 / DSM 1257 / FGSC 987).